The chain runs to 254 residues: 14-3-3-like protein RA215 (254 aa).

Belongs to the 14-3-3 family.

The protein is 14-3-3-like protein RA215 of Solanum tuberosum (Potato).